The following is a 293-amino-acid chain: Protease HtpX (293 aa).

Helical transmembrane passes span 4-24 (IALF…VLSL) and 34-54 (GLLI…LLMS). A Zn(2+)-binding site is contributed by His-139. Residue Glu-140 is part of the active site. His-143 is a binding site for Zn(2+). 2 helical membrane-spanning segments follow: residues 158–178 (VVNT…AGFM) and 193–213 (LIYF…ASII). Glu-222 is a Zn(2+) binding site.

It belongs to the peptidase M48B family. It depends on Zn(2+) as a cofactor.

The protein resides in the cell inner membrane. The polypeptide is Protease HtpX (Enterobacter sp. (strain 638)).